A 502-amino-acid chain; its full sequence is MEENIEKRICVEQLAIEDLISKLPEVLLSQILSYLPTKDIVRTSVLSKRWKSVWLLIPGLDLDSSEFPHYDTFVDFMNEFLFFSREENPCLHKLKLSIQKNENDPSCVTLWTDCVARGKLQHLDVEFGGRVMEREFWEMMPLSLYICKTLLHLRLYRVLLGNFDQSVDSLPSLKSMCLEENVYSNEASLESLISSCRVLEDLTIVKIDDNVRFLRVHSQSLTSLSVGYKSYYPGEIYYYYDRDRGNSGLVIDAPRLKYLTFNNDQSKSKTISNLGSLVKVTILGPIKISRVVGCTEQQMAHKFLTGISRVRYLIVSEDMMEVISSYLKEDSLPQFGNLSYLKASVWLSSFDFLDILPKLLESCPNLKSIVLETTCIVDRTKATVERRVSSVPECLLSSLEFVEIKNRISVDDGALEVARYFVENSVNLQKVVLRLASSFLRRGNQAVLKDILELPRRSSMCQIEVFNALNGHALCFRKNKITGRVFLDYFDVAESYYGAIVS.

An F-box domain is found at 17 to 63 (EDLISKLPEVLLSQILSYLPTKDIVRTSVLSKRWKSVWLLIPGLDLD). LRR repeat units lie at residues 70–98 (YDTFVDFMNEFLFFSREENPCLHKLKLSI), 99–127 (QKNENDPSCVTLWTDCVARGKLQHLDVEF), 147–180 (CKTLLHLRLYRVLLGNFDQSVDSLPSLKSMCLEE), 181–206 (NVYSNEASLESLISSCRVLEDLTIVK), 208–228 (DDNVRFLRVHSQSLTSLSVGY), 238–263 (YYYDRDRGNSGLVIDAPRLKYLTFNN), and 344–373 (SVWLSSFDFLDILPKLLESCPNLKSIVLET). Residues 384-435 (VERRVSSVPECLLSSLEFVEIKNRISVDDGALEVARYFVENSVNLQKVVLRL) form the FBD domain.

This is Putative F-box/FBD/LRR-repeat protein At5g22610 from Arabidopsis thaliana (Mouse-ear cress).